The chain runs to 262 residues: Ribonuclease 3 (262 aa).

Residues 18-141 form the RNase III domain; it reads LATFLKNLDI…LVGAIYEDMG (124 aa). E59 serves as a coordination point for Mg(2+). Residue D63 is part of the active site. D127 and E130 together coordinate Mg(2+). The active site involves E130.

Belongs to the ribonuclease III family. Homodimer. The cofactor is Mg(2+).

The protein localises to the cytoplasm. It catalyses the reaction Endonucleolytic cleavage to 5'-phosphomonoester.. Digests double-stranded RNA. Involved in the processing of primary rRNA transcript to yield the immediate precursors to the large and small rRNAs (23S and 16S). Processes some mRNAs, and tRNAs when they are encoded in the rRNA operon. Processes pre-crRNA and tracrRNA of type II CRISPR loci if present in the organism. This chain is Ribonuclease 3, found in Mycoplasma genitalium (strain ATCC 33530 / DSM 19775 / NCTC 10195 / G37) (Mycoplasmoides genitalium).